The sequence spans 315 residues: HVA22-like protein h (315 aa).

Positions 148–315 (PKPKPKEKKQ…RKARSAGAPR (168 aa)) are disordered. The span at 173-190 (ATSQAASSNPQVRLQSKK) shows a compositional bias: polar residues. Over residues 234–248 (PPGPPPPPPPPPPSP) the composition is skewed to pro residues.

Belongs to the DP1 family.

This is HVA22-like protein h (HVA22H) from Arabidopsis thaliana (Mouse-ear cress).